The sequence spans 274 residues: Protein CIMAP1C (274 aa).

Residues 1–27 (MKLPKGTRSSVYFAQHPEKEPLPSRQE) form a disordered region. Positions 16-27 (HPEKEPLPSRQE) are enriched in basic and acidic residues. STPGR repeat units lie at residues 199-224 (PGPT…MAKR) and 235-260 (PGPG…MGIK).

This sequence belongs to the CIMAP family.

In Homo sapiens (Human), this protein is Protein CIMAP1C.